The chain runs to 157 residues: Endoribonuclease YbeY (157 aa).

3 residues coordinate Zn(2+): histidine 114, histidine 118, and histidine 124.

Belongs to the endoribonuclease YbeY family. Zn(2+) is required as a cofactor.

The protein localises to the cytoplasm. Functionally, single strand-specific metallo-endoribonuclease involved in late-stage 70S ribosome quality control and in maturation of the 3' terminus of the 16S rRNA. The sequence is that of Endoribonuclease YbeY from Yersinia pseudotuberculosis serotype O:3 (strain YPIII).